The chain runs to 157 residues: Ribosomal RNA large subunit methyltransferase H (157 aa).

S-adenosyl-L-methionine is bound by residues Leu73, Gly105, and 124 to 129 (LSRMTF).

The protein belongs to the RNA methyltransferase RlmH family. As to quaternary structure, homodimer.

The protein resides in the cytoplasm. It catalyses the reaction pseudouridine(1915) in 23S rRNA + S-adenosyl-L-methionine = N(3)-methylpseudouridine(1915) in 23S rRNA + S-adenosyl-L-homocysteine + H(+). Its function is as follows. Specifically methylates the pseudouridine at position 1915 (m3Psi1915) in 23S rRNA. The chain is Ribosomal RNA large subunit methyltransferase H from Porphyromonas gingivalis (strain ATCC BAA-308 / W83).